A 232-amino-acid chain; its full sequence is MNAVNLMARPEALTFAPEQSALIVVDMQNAYASQGGYLDLAGFDVSTTAPVIENIKTAVAAAREAGMTIVWFQNGWDSDYLEAGGPGSPNFHKSNALKTMRRRPELHGKLLAKGGWDYQLVDELTPLPGDIVLPKPRYSGFFNTPLDSMLRARNIRHLVFTGIATNVCVESTLRDGFFLEYFGVVLEDATHQAGPPFAQQAALFNIETFFGWVSDVQRFCDALSPAALARIA.

The Proton acceptor role is filled by aspartate 26. Residue lysine 135 is part of the active site. Cysteine 168 serves as the catalytic Nucleophile.

Belongs to the isochorismatase family. RutB subfamily.

The catalysed reaction is (Z)-3-ureidoacrylate + H2O + H(+) = (Z)-3-aminoacrylate + NH4(+) + CO2. The enzyme catalyses (Z)-3-ureidoacrylate + H2O = (Z)-3-aminoacrylate + carbamate + H(+). It carries out the reaction (Z)-2-methylureidoacrylate + H2O + H(+) = (Z)-2-methylaminoacrylate + NH4(+) + CO2. Hydrolyzes ureidoacrylate to form aminoacrylate and carbamate. The carbamate hydrolyzes spontaneously, thereby releasing one of the nitrogen atoms of the pyrimidine ring as ammonia and one of its carbon atoms as CO2. The chain is Ureidoacrylate amidohydrolase RutB from Cronobacter turicensis (strain DSM 18703 / CCUG 55852 / LMG 23827 / z3032).